A 478-amino-acid chain; its full sequence is Probable cytosolic Fe-S cluster assembly factor AAEL012261 (478 aa).

[4Fe-4S] cluster is bound by residues Cys-23, Cys-69, Cys-72, Cys-75, Cys-189, Cys-245, Cys-396, and Cys-400.

It belongs to the NARF family.

Functionally, component of the cytosolic iron-sulfur (Fe/S) protein assembly machinery. Required for maturation of extramitochondrial Fe/S proteins. The sequence is that of Probable cytosolic Fe-S cluster assembly factor AAEL012261 from Aedes aegypti (Yellowfever mosquito).